A 178-amino-acid chain; its full sequence is ATP-dependent protease subunit HslV (178 aa).

Thr-7 is an active-site residue. The Na(+) site is built by Gly-162, Cys-165, and Thr-168.

This sequence belongs to the peptidase T1B family. HslV subfamily. As to quaternary structure, a double ring-shaped homohexamer of HslV is capped on each side by a ring-shaped HslU homohexamer. The assembly of the HslU/HslV complex is dependent on binding of ATP.

The protein resides in the cytoplasm. The catalysed reaction is ATP-dependent cleavage of peptide bonds with broad specificity.. Allosterically activated by HslU binding. Its function is as follows. Protease subunit of a proteasome-like degradation complex believed to be a general protein degrading machinery. This chain is ATP-dependent protease subunit HslV, found in Paraburkholderia phymatum (strain DSM 17167 / CIP 108236 / LMG 21445 / STM815) (Burkholderia phymatum).